Here is an 855-residue protein sequence, read N- to C-terminus: Potassium channel AKT2 (855 aa).

A compositionally biased stretch (low complexity) spans 1–12 (MKTSSFESASSS). Residues 1–24 (MKTSSFESASSSGGSGGGGGGGGG) form a disordered region. Residues 1-75 (MKTSSFESAS…PLDSRYRCWD (75 aa)) lie on the Cytoplasmic side of the membrane. Gly residues predominate over residues 13–24 (GGSGGGGGGGGG). A helical transmembrane segment spans residues 76–96 (TFMVVLVAYSAWVYPFEVAFM). At 97–105 (NASPKGGLE) the chain is on the extracellular side. The helical transmembrane segment at 106-126 (VADIVVDLFFAVDIVLTFFVA) threads the bilayer. Topologically, residues 127–149 (YIDSRTQLLVRDRRRIATRYLST) are cytoplasmic. Residues 150–170 (FFIMDVASTIPFQGLAYIVTG) form a helical membrane-spanning segment. Residues 171–179 (EVRESPAFS) lie on the Extracellular side of the membrane. A helical; Voltage-sensor membrane pass occupies residues 180 to 200 (LLGILRLWRLRKVKQFFTRLE). At 201–214 (KDIRFNYFWIRCAR) the chain is on the cytoplasmic side. Residues 215–235 (LIAVTLFLVHCAGCLYYLIAD) form a helical membrane-spanning segment. Residues 236–262 (RYPHREKTWIGAVIPDFQEASLWIRYT) lie on the Extracellular side of the membrane. Positions 263 to 282 (SSVYWSITTMTTVGYGDMHA) form an intramembrane region, pore-forming. Topologically, residues 283–285 (QNT) are extracellular. Residues 286–306 (VEMIFNIFYMLFNLGLTAYLI) form a helical membrane-spanning segment. Residues 307–855 (GNMTNLVVEG…VASMDSVSGS (549 aa)) are Cytoplasmic-facing. 391–511 (LFKGVSREVL…VVIIKNFLKH (121 aa)) provides a ligand contact to a nucleoside 3',5'-cyclic phosphate. ANK repeat units follow at residues 536–565 (NIPC…DPDV), 569–598 (KGRT…NVNI), 602–631 (QGNT…VSSP), 634–663 (AAGD…AVDS), and 667–696 (DGAT…SVDR). Residues 744 to 765 (EVGSSGDSRNGRRQSARSDGAH) are disordered. The 88-residue stretch at 768-855 (RVSIYRGHPF…VASMDSVSGS (88 aa)) folds into the KHA domain.

It belongs to the potassium channel family. Plant (TC 1.A.1.4) subfamily. In terms of assembly, the potassium channel is probably a homo- or heterotetrameric complex of pore-forming subunits.

The protein localises to the membrane. Its function is as follows. Probable inward-rectifying potassium channel. Assuming opened or closed conformations in response to the voltage difference across the membrane, the channel is activated by hyperpolarization. The chain is Potassium channel AKT2 from Oryza sativa subsp. japonica (Rice).